Reading from the N-terminus, the 492-residue chain is 2-succinylbenzoate--CoA ligase (492 aa).

The protein belongs to the ATP-dependent AMP-binding enzyme family. MenE subfamily.

It carries out the reaction 2-succinylbenzoate + ATP + CoA = 2-succinylbenzoyl-CoA + AMP + diphosphate. It functions in the pathway quinol/quinone metabolism; 1,4-dihydroxy-2-naphthoate biosynthesis; 1,4-dihydroxy-2-naphthoate from chorismate: step 5/7. The protein operates within quinol/quinone metabolism; menaquinone biosynthesis. Its function is as follows. Converts 2-succinylbenzoate (OSB) to 2-succinylbenzoyl-CoA (OSB-CoA). The sequence is that of 2-succinylbenzoate--CoA ligase from Staphylococcus aureus (strain MSSA476).